Reading from the N-terminus, the 193-residue chain is Ribosomal RNA large subunit methyltransferase E (193 aa).

S-adenosyl-L-methionine contacts are provided by Gly-51, Trp-53, Asp-69, Asp-85, and Asp-108. Lys-148 serves as the catalytic Proton acceptor.

Belongs to the class I-like SAM-binding methyltransferase superfamily. RNA methyltransferase RlmE family.

The protein resides in the cytoplasm. The enzyme catalyses uridine(2552) in 23S rRNA + S-adenosyl-L-methionine = 2'-O-methyluridine(2552) in 23S rRNA + S-adenosyl-L-homocysteine + H(+). In terms of biological role, specifically methylates the uridine in position 2552 of 23S rRNA at the 2'-O position of the ribose in the fully assembled 50S ribosomal subunit. This is Ribosomal RNA large subunit methyltransferase E from Methanoregula boonei (strain DSM 21154 / JCM 14090 / 6A8).